The following is a 209-amino-acid chain: Orotate phosphoribosyltransferase (209 aa).

Residues Arg-96, Lys-100, His-102, and 122-130 (EDLISTGGS) contribute to the 5-phospho-alpha-D-ribose 1-diphosphate site. Ser-126 lines the orotate pocket.

The protein belongs to the purine/pyrimidine phosphoribosyltransferase family. PyrE subfamily. In terms of assembly, homodimer. The cofactor is Mg(2+).

The enzyme catalyses orotidine 5'-phosphate + diphosphate = orotate + 5-phospho-alpha-D-ribose 1-diphosphate. Its pathway is pyrimidine metabolism; UMP biosynthesis via de novo pathway; UMP from orotate: step 1/2. Catalyzes the transfer of a ribosyl phosphate group from 5-phosphoribose 1-diphosphate to orotate, leading to the formation of orotidine monophosphate (OMP). In Lactococcus lactis subsp. lactis (strain IL1403) (Streptococcus lactis), this protein is Orotate phosphoribosyltransferase.